We begin with the raw amino-acid sequence, 132 residues long: Small ribosomal subunit protein uS11 (132 aa).

Belongs to the universal ribosomal protein uS11 family. Part of the 30S ribosomal subunit. Interacts with proteins S7 and S18. Binds to IF-3.

Located on the platform of the 30S subunit, it bridges several disparate RNA helices of the 16S rRNA. Forms part of the Shine-Dalgarno cleft in the 70S ribosome. The polypeptide is Small ribosomal subunit protein uS11 (Legionella pneumophila (strain Paris)).